The primary structure comprises 119 residues: Membrane-anchored ubiquitin-fold protein 3 (119 aa).

Residues 8–76 form the Ubiquitin-like domain; sequence IEVKFRLFDG…NNRTLAESRV (69 aa). Position 116 is a cysteine methyl ester (Cys-116). The S-geranylgeranyl cysteine moiety is linked to residue Cys-116. A propeptide spans 117–119 (removed in mature form); it reads TIL.

The protein localises to the cell membrane. In terms of biological role, may serve as docking site to facilitate the association of other proteins to the plasma membrane. This chain is Membrane-anchored ubiquitin-fold protein 3 (MUB3), found in Oryza sativa subsp. japonica (Rice).